The chain runs to 156 residues: Endoribonuclease YbeY (156 aa).

Residues H122, H126, and H132 each contribute to the Zn(2+) site.

This sequence belongs to the endoribonuclease YbeY family. Requires Zn(2+) as cofactor.

It is found in the cytoplasm. Single strand-specific metallo-endoribonuclease involved in late-stage 70S ribosome quality control and in maturation of the 3' terminus of the 16S rRNA. The protein is Endoribonuclease YbeY of Bacillus cereus (strain ATCC 10987 / NRS 248).